The primary structure comprises 305 residues: MRIAVLGGGAWGTTLADLAAAQDHQVRVWSRSGALALGEVLAQAEAVFSCLPMAAVAGVIDQVIALGLPAGVIVVNATKGLDRRTARPASSLWQARFADHPLVVLSGPNLAAEIRAGLPAATVVASADGQAAGRIQQCLASERFRVYTSADWRGVELGGVLKNVIAIAAGVSDGLGLGANAKAALITRGLAEMIRVGTHWGGLAETFYGLSGLGDLLTTCNSPLSRNYQVGFGLGKGQSLEAVLERLEGTAEGVATAAILAEYAQRSALEVPITDQICAVLGGLRPPTEALAALMTRRLREEDGG.

Trp-11, Arg-31, and Lys-79 together coordinate NADPH. Sn-glycerol 3-phosphate is bound by residues Lys-79 and Gly-107. Residue Ala-111 participates in NADPH binding. Residues Lys-162, Asp-215, Ser-225, Arg-226, and Asn-227 each contribute to the sn-glycerol 3-phosphate site. Catalysis depends on Lys-162, which acts as the Proton acceptor. Residue Arg-226 participates in NADPH binding. Glu-252 is a binding site for NADPH.

This sequence belongs to the NAD-dependent glycerol-3-phosphate dehydrogenase family.

Its subcellular location is the cytoplasm. The catalysed reaction is sn-glycerol 3-phosphate + NAD(+) = dihydroxyacetone phosphate + NADH + H(+). It carries out the reaction sn-glycerol 3-phosphate + NADP(+) = dihydroxyacetone phosphate + NADPH + H(+). The protein operates within membrane lipid metabolism; glycerophospholipid metabolism. Catalyzes the reduction of the glycolytic intermediate dihydroxyacetone phosphate (DHAP) to sn-glycerol 3-phosphate (G3P), the key precursor for phospholipid synthesis. This is Glycerol-3-phosphate dehydrogenase [NAD(P)+] from Gloeobacter violaceus (strain ATCC 29082 / PCC 7421).